We begin with the raw amino-acid sequence, 420 residues long: Argininosuccinate synthase (420 aa).

Alanine 11–threonine 19 provides a ligand contact to ATP. L-citrulline is bound at residue tyrosine 88. Residue glycine 118 coordinates ATP. Positions 120, 124, and 125 each coordinate L-aspartate. Residue asparagine 124 coordinates L-citrulline. 5 residues coordinate L-citrulline: arginine 128, serine 174, serine 183, glutamate 257, and tyrosine 269. Positions lysine 401–glutamate 420 are disordered. A compositionally biased stretch (basic and acidic residues) spans serine 409 to glutamate 420.

It belongs to the argininosuccinate synthase family. Type 1 subfamily. As to quaternary structure, homotetramer.

The protein localises to the cytoplasm. The catalysed reaction is L-citrulline + L-aspartate + ATP = 2-(N(omega)-L-arginino)succinate + AMP + diphosphate + H(+). Its pathway is amino-acid biosynthesis; L-arginine biosynthesis; L-arginine from L-ornithine and carbamoyl phosphate: step 2/3. The polypeptide is Argininosuccinate synthase (Haloarcula marismortui (strain ATCC 43049 / DSM 3752 / JCM 8966 / VKM B-1809) (Halobacterium marismortui)).